A 237-amino-acid polypeptide reads, in one-letter code: UPF0758 protein Aave_3773 (237 aa).

The MPN domain occupies 115–237; it reads LFHSPRAVRD…SLSMAEEGLI (123 aa). His-186, His-188, and Asp-199 together coordinate Zn(2+). Positions 186 to 199 match the JAMM motif motif; sequence HNHPSGQVQPSRAD.

Belongs to the UPF0758 family.

The protein is UPF0758 protein Aave_3773 of Paracidovorax citrulli (strain AAC00-1) (Acidovorax citrulli).